Consider the following 96-residue polypeptide: Frd operon uncharacterized protein C (96 aa).

The protein belongs to the HupF/HypC family.

The chain is Frd operon uncharacterized protein C from Proteus vulgaris.